The chain runs to 322 residues: Helix-loop-helix 34 (322 aa).

Basic and acidic residues predominate over residues 1 to 11 (METNLSEEKQK). The segment at 1–23 (METNLSEEKQKPSKSQAQQRRQM) is disordered. The 55-residue stretch at 8 to 62 (EKQKPSKSQAQQRRQMENYEFSQLANELPLARAISGQHIDKTTMVRLATAYIKLH) folds into the bHLH domain. 2 PAS domains span residues 82–152 (DSLW…DLNW) and 203–276 (PTPV…FNLG).

In terms of assembly, efficient DNA binding requires dimerization with another bHLH protein. As to expression, expressed in a small subset of neurons, probably AVJL and AVJR. Expressed in the AVH neurons.

The protein resides in the nucleus. Transcription factor. Involved in specifying AVH neuron identity, acting in concert with unc-42. Involved in serotonin-mediated feeding behavior, probably acting by modulating expression of genes involved in glutamate signaling. The chain is Helix-loop-helix 34 (hlh-34) from Caenorhabditis elegans.